Reading from the N-terminus, the 164-residue chain is N5-carboxyaminoimidazole ribonucleotide mutase (164 aa).

Residues Ser-13, Asp-16, and Arg-43 each coordinate substrate.

Belongs to the AIR carboxylase family. Class I subfamily.

The catalysed reaction is 5-carboxyamino-1-(5-phospho-D-ribosyl)imidazole + H(+) = 5-amino-1-(5-phospho-D-ribosyl)imidazole-4-carboxylate. The protein operates within purine metabolism; IMP biosynthesis via de novo pathway; 5-amino-1-(5-phospho-D-ribosyl)imidazole-4-carboxylate from 5-amino-1-(5-phospho-D-ribosyl)imidazole (N5-CAIR route): step 2/2. Catalyzes the conversion of N5-carboxyaminoimidazole ribonucleotide (N5-CAIR) to 4-carboxy-5-aminoimidazole ribonucleotide (CAIR). In Haemophilus influenzae (strain ATCC 51907 / DSM 11121 / KW20 / Rd), this protein is N5-carboxyaminoimidazole ribonucleotide mutase.